Reading from the N-terminus, the 276-residue chain is MLMITSFTNPRVAQAFVDYMATQGVVLTLQQHTQTDVWLADESQAERVNAELARFLENPGDPRYLAASWTNGHMDSGLHYQRFPFFATVRERAGPFTLLLMAACILVFIIMNVVGDQRVMIALAWPYGPAVQYDVWRYFTHALMHFSVLHILFNLLWWWYLGGAVEKRLGSGKLIVITIISALLSGYVQHKFSGPWFGGLSGVVYALMGYAWLRGERDPESGIYMQRGLITFALLWLIAGWFDLFGMSIANGAHVTGLAVGLAMAFADTLNARKRT.

6 consecutive transmembrane segments (helical) span residues 94–114 (GPFT…MNVV), 142–162 (ALMH…WYLG), 169–189 (LGSG…GYVQ), 192–212 (FSGP…GYAW), 229–249 (LITF…GMSI), and 250–270 (ANGA…ADTL). The Nucleophile role is filled by Ser-201. Residue His-254 is part of the active site.

The protein belongs to the peptidase S54 family.

The protein resides in the cell inner membrane. It catalyses the reaction Cleaves type-1 transmembrane domains using a catalytic dyad composed of serine and histidine that are contributed by different transmembrane domains.. Functionally, rhomboid-type serine protease that catalyzes intramembrane proteolysis. This Enterobacter sp. (strain 638) protein is Rhomboid protease GlpG.